The primary structure comprises 130 residues: Small ribosomal subunit protein uS9 (130 aa).

This sequence belongs to the universal ribosomal protein uS9 family.

The sequence is that of Small ribosomal subunit protein uS9 from Enterococcus faecalis (strain ATCC 700802 / V583).